Consider the following 212-residue polypeptide: MKVAVIDYGMGNLHSVLKSLQAVNENGADIFLTRDPEAVVKADKVVFPGQGAMPDCMRELNRHGLAEAVRETTQSKPFFGICVGAQLLFEHSEEGDTAGLGLFPGKVVRFADDQVAGGERLKVPHMGWNQVYQTRSHPLFAGIADGERFYFVHSYHFAPADAALTLAESDYPQRFACIVGRGNIFATQFHTEKSHRAGLQMMKNFLAWDGNV.

The Glutamine amidotransferase type-1 domain maps to 2-212 (KVAVIDYGMG…KNFLAWDGNV (211 aa)). The Nucleophile role is filled by Cys-82. Active-site residues include His-190 and Glu-192.

Heterodimer of HisH and HisF.

Its subcellular location is the cytoplasm. It catalyses the reaction 5-[(5-phospho-1-deoxy-D-ribulos-1-ylimino)methylamino]-1-(5-phospho-beta-D-ribosyl)imidazole-4-carboxamide + L-glutamine = D-erythro-1-(imidazol-4-yl)glycerol 3-phosphate + 5-amino-1-(5-phospho-beta-D-ribosyl)imidazole-4-carboxamide + L-glutamate + H(+). The enzyme catalyses L-glutamine + H2O = L-glutamate + NH4(+). The protein operates within amino-acid biosynthesis; L-histidine biosynthesis; L-histidine from 5-phospho-alpha-D-ribose 1-diphosphate: step 5/9. Functionally, IGPS catalyzes the conversion of PRFAR and glutamine to IGP, AICAR and glutamate. The HisH subunit catalyzes the hydrolysis of glutamine to glutamate and ammonia as part of the synthesis of IGP and AICAR. The resulting ammonia molecule is channeled to the active site of HisF. This chain is Imidazole glycerol phosphate synthase subunit HisH, found in Chromobacterium violaceum (strain ATCC 12472 / DSM 30191 / JCM 1249 / CCUG 213 / NBRC 12614 / NCIMB 9131 / NCTC 9757 / MK).